We begin with the raw amino-acid sequence, 464 residues long: Chaperone SurA (464 aa).

A signal peptide spans 1–25 (MTRYFSIVLSLLLAVSCVFLPVASA). PpiC domains follow at residues 175-277 (GAQY…KLVE) and 292-391 (ATEY…QRLG). The segment at 439–464 (PADDHQTPSAAVIPATGAVLPSATKH) is disordered.

It localises to the periplasm. It carries out the reaction [protein]-peptidylproline (omega=180) = [protein]-peptidylproline (omega=0). Functionally, chaperone involved in the correct folding and assembly of outer membrane proteins. Recognizes specific patterns of aromatic residues and the orientation of their side chains, which are found more frequently in integral outer membrane proteins. May act in both early periplasmic and late outer membrane-associated steps of protein maturation. The chain is Chaperone SurA from Xylella fastidiosa (strain 9a5c).